A 355-amino-acid chain; its full sequence is Protein-glutamate methylesterase/protein-glutamine glutaminase 3 (355 aa).

Residues 5 to 122 enclose the Response regulatory domain; the sequence is KVLIVDDSAV…KQFLEESRVR (118 aa). Residue aspartate 56 is modified to 4-aspartylphosphate. The CheB-type methylesterase domain maps to 165-355; that stretch reads IQTTEKVVVV…IAREVLRLCG (191 aa). Catalysis depends on residues serine 177, histidine 203, and aspartate 299.

The protein belongs to the CheB family. Post-translationally, phosphorylated by CheA. Phosphorylation of the N-terminal regulatory domain activates the methylesterase activity.

It is found in the cytoplasm. The enzyme catalyses [protein]-L-glutamate 5-O-methyl ester + H2O = L-glutamyl-[protein] + methanol + H(+). It catalyses the reaction L-glutaminyl-[protein] + H2O = L-glutamyl-[protein] + NH4(+). Involved in chemotaxis. Part of a chemotaxis signal transduction system that modulates chemotaxis in response to various stimuli. Catalyzes the demethylation of specific methylglutamate residues introduced into the chemoreceptors (methyl-accepting chemotaxis proteins or MCP) by CheR. Also mediates the irreversible deamidation of specific glutamine residues to glutamic acid. This is Protein-glutamate methylesterase/protein-glutamine glutaminase 3 from Geobacter metallireducens (strain ATCC 53774 / DSM 7210 / GS-15).